Consider the following 379-residue polypeptide: NuA4 complex subunit EAF3 homolog (379 aa).

Residues 6–61 (EENEKVLVHHQNRIYEAKIIKVDPKTSKSDKKKPLYFIHYLGWKEKWNEWIEPNKI) form the Tudor-knot domain. The tract at residues 75 to 212 (TNIKASTTSL…KRNDSKSSHF (138 aa)) is disordered. Positions 78–87 (KASTTSLNNK) are enriched in low complexity. The segment covering 111–141 (ENSDEDENESELEDGGGEDADEGGEDIEDQE) has biased composition (acidic residues). Residues 165–199 (SSSSSSSSKSNNNNNNNNNNNNNNNNNNNNNNNNN) show a composition bias toward low complexity. The MRG domain maps to 214–377 (STKFIDIEIP…ASSPYLKAAS (164 aa)).

In terms of assembly, component of the NuA4 histone acetyltransferase complex.

The protein localises to the nucleus. Functionally, component of the NuA4 histone acetyltransferase complex which is involved in transcriptional activation of selected genes principally by acetylation of nucleosomal histone H4 and H2A. The NuA4 complex is also involved in DNA repair. Also a component of a complex which acts to repress transcription by deacetylation of nucleosomal histones. The chain is NuA4 complex subunit EAF3 homolog from Dictyostelium discoideum (Social amoeba).